The primary structure comprises 298 residues: Ethanolamine ammonia-lyase small subunit (298 aa).

Residues 15–43 (ASMGQDVPQPVAPSTQEGAKPQRAAPTAT) are disordered. The adenosylcob(III)alamin site is built by valine 210, glutamate 231, and cysteine 261.

The protein belongs to the EutC family. The basic unit is a heterodimer which dimerizes to form tetramers. The heterotetramers trimerize; 6 large subunits form a core ring with 6 small subunits projecting outwards. Adenosylcob(III)alamin is required as a cofactor.

It localises to the bacterial microcompartment. It catalyses the reaction ethanolamine = acetaldehyde + NH4(+). Its pathway is amine and polyamine degradation; ethanolamine degradation. In terms of biological role, catalyzes the deamination of various vicinal amino-alcohols to oxo compounds. Allows this organism to utilize ethanolamine as the sole source of nitrogen and carbon in the presence of external vitamin B12. The chain is Ethanolamine ammonia-lyase small subunit from Salmonella arizonae (strain ATCC BAA-731 / CDC346-86 / RSK2980).